The following is a 110-amino-acid chain: UPF0339 protein YegP (110 aa).

A run of 2 repeats spans residues 10–58 (SSDS…RYEK) and 61–109 (ASNG…VKDN).

Belongs to the UPF0339 family. Duplicated subfamily.

The protein is UPF0339 protein YegP (yegP) of Escherichia coli O157:H7.